We begin with the raw amino-acid sequence, 517 residues long: Crotonobetaine/carnitine--CoA ligase (517 aa).

The protein belongs to the ATP-dependent AMP-binding enzyme family.

The catalysed reaction is 4-(trimethylamino)butanoate + ATP + CoA = 4-(trimethylamino)butanoyl-CoA + AMP + diphosphate. It catalyses the reaction crotonobetaine + ATP + CoA = crotonobetainyl-CoA + AMP + diphosphate. The enzyme catalyses (R)-carnitine + ATP + CoA = (R)-carnitinyl-CoA + AMP + diphosphate. Its pathway is amine and polyamine metabolism; carnitine metabolism. Functionally, catalyzes the transfer of CoA to carnitine, generating the initial carnitinyl-CoA needed for the CaiB reaction cycle. Also has activity toward crotonobetaine and gamma-butyrobetaine. The polypeptide is Crotonobetaine/carnitine--CoA ligase (Escherichia coli O6:K15:H31 (strain 536 / UPEC)).